Here is a 245-residue protein sequence, read N- to C-terminus: DNA polymerase sliding clamp (245 aa).

This sequence belongs to the PCNA family. Homotrimer. The subunits circularize to form a toroid; DNA passes through its center. Replication factor C (RFC) is required to load the toroid on the DNA.

Sliding clamp subunit that acts as a moving platform for DNA processing. Responsible for tethering the catalytic subunit of DNA polymerase and other proteins to DNA during high-speed replication. The sequence is that of DNA polymerase sliding clamp from Methanosarcina barkeri (strain Fusaro / DSM 804).